The primary structure comprises 58 residues: Metallothionein-1 (58 aa).

Residues 1-28 (PGPCCNDKCVCKEGGCKEGCQCTSCRCS) are beta. A divalent metal cation is bound by residues C4, C5, C9, C11, C16, C20, C22, C25, C27, C30, C33, C37, C39, C45, C49, C53, C55, and C56. Residues 29-58 (PCEKCSSGCKCANKEECSKTCSKACSCCPT) are alpha.

The protein belongs to the metallothionein superfamily. Type 3 family.

In terms of biological role, metallothioneins have a high content of cysteine residues that bind various heavy metals. Class I MTS in marine crustacea are involved in the sequestration of elevated levels of heavy-metal ions. The chain is Metallothionein-1 from Scylla serrata (Mud crab).